A 162-amino-acid chain; its full sequence is uncharacterized protein (162 aa).

The next 3 helical transmembrane spans lie at 7 to 27, 51 to 71, and 134 to 154; these read LIAD…IVGL, LSIL…YMIG, and TYVA…ITIG.

Belongs to the DedA family.

The protein localises to the cell membrane. This is an uncharacterized protein from Bacillus subtilis (strain 168).